A 540-amino-acid polypeptide reads, in one-letter code: MDSLRFLRILLLSSSILLLSLRSTVTAGDIVHQDNLAPKKPGCENDFVLVKVQTWIDGVENEEFVGVGARFGKRIVSKEKNANQTHLVFANPRDSCTPLKNKLSGDVVIVERGNCRFTAKANNAEAAGASALLIINNQKELYKMVCEPDETDLDIQIPAVMLPQDAGASLQKMLANSSKVSAQLYSPRRPAVDVAEVFLWLMAIGTILCASYWSAWSAREAAIEHDKLLKDAIDEIPNTNDGGSGVVEINSISAIFFVVLASGFLVILYKLMSYWFVELLVVVFCIGGVEGLQTCLVALLSRWFQRAADTYVKVPFLGPISYLTLAVSPFCIVFAVLWAVYRVHSFAWIGQDVLGIALIITVLQIVHVPNLKVGTVLLSCAFLYDIFWVFVSKKLFHESVMIVVARGDKSGEDGIPMLLKIPRMFDPWGGYSIIGFGDILLPGLLIAFALRYDWLANKTLRTGYFIWAMVAYGLGLLITYVALNLMDGHGQPALLYIVPFTLGTMLTLARKRDDLWILWTKGEPERACPHHVRLEQCSEK.

The first 27 residues, 1–27 (MDSLRFLRILLLSSSILLLSLRSTVTA), serve as a signal peptide directing secretion. Topologically, residues 28–196 (GDIVHQDNLA…PRRPAVDVAE (169 aa)) are lumenal. Asn-83 is a glycosylation site (N-linked (GlcNAc...) asparagine). In terms of domain architecture, PA spans 95–173 (SCTPLKNKLS…QDAGASLQKM (79 aa)). The N-linked (GlcNAc...) asparagine glycan is linked to Asn-176. Residues 197 to 217 (VFLWLMAIGTILCASYWSAWS) form a helical membrane-spanning segment. Residues 218-248 (AREAAIEHDKLLKDAIDEIPNTNDGGSGVVE) are Cytoplasmic-facing. A helical transmembrane segment spans residues 249–269 (INSISAIFFVVLASGFLVILY). Residues 270–278 (KLMSYWFVE) lie on the Lumenal side of the membrane. The helical transmembrane segment at 279–299 (LLVVVFCIGGVEGLQTCLVAL) threads the bilayer. Residues 300–319 (LSRWFQRAADTYVKVPFLGP) lie on the Cytoplasmic side of the membrane. The chain crosses the membrane as a helical span at residues 320 to 340 (ISYLTLAVSPFCIVFAVLWAV). The Lumenal portion of the chain corresponds to 341 to 345 (YRVHS). A helical transmembrane segment spans residues 346 to 366 (FAWIGQDVLGIALIITVLQIV). The Cytoplasmic segment spans residues 367–370 (HVPN). Residues 371 to 391 (LKVGTVLLSCAFLYDIFWVFV) traverse the membrane as a helical segment. Asp-385 is a catalytic residue. The Lumenal segment spans residues 392-429 (SKKLFHESVMIVVARGDKSGEDGIPMLLKIPRMFDPWG). Residues 430–450 (GYSIIGFGDILLPGLLIAFAL) form a helical membrane-spanning segment. Asp-438 is a catalytic residue. Topologically, residues 451-462 (RYDWLANKTLRT) are cytoplasmic. Residues 463 to 483 (GYFIWAMVAYGLGLLITYVAL) traverse the membrane as a helical segment. Residues 484–488 (NLMDG) lie on the Lumenal side of the membrane. Residues 489 to 509 (HGQPALLYIVPFTLGTMLTLA) form a helical membrane-spanning segment. Residues 492–494 (PAL) carry the PAL motif. Residues 510 to 540 (RKRDDLWILWTKGEPERACPHHVRLEQCSEK) are Cytoplasmic-facing.

Belongs to the peptidase A22B family. In terms of processing, glycosylated. As to expression, ubiquitous.

It localises to the endosome membrane. Intramembrane-cleaving aspartic protease (I-CLiP) that cleaves type II membrane signal peptides in the hydrophobic plane of the membrane. This is Signal peptide peptidase-like 2 (SPPL2) from Arabidopsis thaliana (Mouse-ear cress).